Consider the following 325-residue polypeptide: MEIFDYDNILLLPRKCRVESRSECDASVELGGRSFRIPAVPANMKTVVDESICTWLAQNGYFYVMHRFDLDNVQFVREMQGKGCFASISLGVKKPDYDTVDRFVAEGLCPEYITIDIAHGHADSVKNMIGYLKEKLPRSFVIAGNVGTPEAVIDLENWGADATKVGIGPGKVCITKLKTGFGTGGWQLSALKWCARVATKPIIADGGIRSHGDIAKSVRFGATMVMIGSLFAGHEESPGQTVEENGQRFKEYYGSASDFNKGEYKHVEGKRILEPVKGLLANTLIEMEQDVQSSISYSGGKKLMDIRKVNYVILGGDNAGEHLLM.

The active-site Thioimidate intermediate is the Cys-173. Residue 202 to 225 (IIADGGIRSHGDIAKSVRFGATMV) participates in NADP(+) binding.

This sequence belongs to the IMPDH/GMPR family. GuaC type 2 subfamily.

The catalysed reaction is IMP + NH4(+) + NADP(+) = GMP + NADPH + 2 H(+). Catalyzes the irreversible NADPH-dependent deamination of GMP to IMP. It functions in the conversion of nucleobase, nucleoside and nucleotide derivatives of G to A nucleotides, and in maintaining the intracellular balance of A and G nucleotides. The polypeptide is GMP reductase (Delftia acidovorans (strain DSM 14801 / SPH-1)).